The chain runs to 451 residues: MIDSEALESERVKLKRDIADLRANLNRKEQCLRELEAAIAAGEDSDEAEESSNDMPTPQTKLTNDDIARYSRQLILQDFGVQGQLKLKNSSVLIVGMGGLGCPAAQYLVAAGCGHLGLIDYDEVERSNLHRQILHSEHRCGMSKAESARIALLELNSHCQIRCHSRLINSMNAMHIIRPYDVVLDCSDNVATRYLLNDACVMLRKPLVSGSALKMDGQLTVYGYGQGPCYRCIYPVPPPPEAVTNCGDGGVLGAVTGIIGAMQALEAIKVIIGLGDVMSGRLLIFDGSSFMFRNIRIRTKRPNCHVCSAQPLITELIDYEMFCGMHATDKDNPLDLLEPDQRLEVKEYHQKLQSQPHLLLDVRPPAEFEICQLPRSINVPLSEILDDSYLKRFAKQLEDKELPIVLLCRRGNDSQIAVQHITNRFPAHSIRDLVGGLHAWTGSVDATFPIY.

Residues 42–62 (GEDSDEAEESSNDMPTPQTKL) are disordered. The segment covering 43-52 (EDSDEAEESS) has biased composition (acidic residues). Thr60 carries the post-translational modification Phosphothreonine. ATP-binding positions include Gly99, Asp120, 127-131 (SNLHR), Lys144, and 188-189 (DN). Zn(2+)-binding residues include Cys229 and Cys232. The Glycyl thioester intermediate; for adenylyltransferase activity role is filled by Cys246. Zn(2+)-binding residues include Cys304 and Cys307. Residues 353 to 449 (QSQPHLLLDV…WTGSVDATFP (97 aa)) enclose the Rhodanese domain. The active-site Cysteine persulfide intermediate; for sulfurtransferase activity is Cys408.

It in the N-terminal section; belongs to the HesA/MoeB/ThiF family. UBA4 subfamily. Zn(2+) serves as cofactor.

The protein localises to the cytoplasm. The catalysed reaction is [molybdopterin-synthase sulfur-carrier protein]-C-terminal Gly-Gly + ATP + H(+) = [molybdopterin-synthase sulfur-carrier protein]-C-terminal Gly-Gly-AMP + diphosphate. The enzyme catalyses [molybdopterin-synthase sulfur-carrier protein]-C-terminal Gly-Gly-AMP + S-sulfanyl-L-cysteinyl-[cysteine desulfurase] + AH2 = [molybdopterin-synthase sulfur-carrier protein]-C-terminal-Gly-aminoethanethioate + L-cysteinyl-[cysteine desulfurase] + A + AMP + 2 H(+). It functions in the pathway tRNA modification; 5-methoxycarbonylmethyl-2-thiouridine-tRNA biosynthesis. Its pathway is cofactor biosynthesis; molybdopterin biosynthesis. Plays a central role in 2-thiolation of mcm(5)S(2)U at tRNA wobble positions of cytosolic tRNA(Lys), tRNA(Glu) and tRNA(Gln). Also essential during biosynthesis of the molybdenum cofactor. Acts by mediating the C-terminal thiocarboxylation of sulfur carriers URM1 and MOCS2A. Its N-terminus first activates URM1 and MOCS2A as acyl-adenylates (-COAMP), then the persulfide sulfur on the catalytic cysteine is transferred to URM1 and MOCS2A to form thiocarboxylation (-COSH) of their C-terminus. The reaction probably involves hydrogen sulfide that is generated from the persulfide intermediate and that acts as a nucleophile towards URM1 and MOCS2A. Subsequently, a transient disulfide bond is formed. Does not use thiosulfate as sulfur donor; NFS1 probably acting as a sulfur donor for thiocarboxylation reactions. The sequence is that of Adenylyltransferase and sulfurtransferase MOCS3-2 from Drosophila pseudoobscura pseudoobscura (Fruit fly).